We begin with the raw amino-acid sequence, 109 residues long: Small ribosomal subunit protein eS25 (109 aa).

The disordered stretch occupies residues 1–36 (MGGASKKPISTVEKRMKKMAEEQQKKQQKRATTKTG). Over residues 12–25 (VEKRMKKMAEEQQK) the composition is skewed to basic and acidic residues.

This sequence belongs to the eukaryotic ribosomal protein eS25 family.

The polypeptide is Small ribosomal subunit protein eS25 (rps25e) (Sulfurisphaera tokodaii (strain DSM 16993 / JCM 10545 / NBRC 100140 / 7) (Sulfolobus tokodaii)).